Consider the following 195-residue polypeptide: Adenylate kinase (195 aa).

ATP is bound at residue 10 to 15 (GAGKGT). The interval 30-59 (STGDMLRAAVAAGTPVGLKAKAVMDAGGLV) is NMP. Residues T31, R36, 57 to 59 (GLV), 85 to 88 (GFPR), and Q92 each bind AMP. Residues 126–143 (NRAAEAQAKGEAVRKDDD) form an LID region. R127 lines the ATP pocket. R150 provides a ligand contact to AMP. A178 serves as a coordination point for ATP.

Belongs to the adenylate kinase family. In terms of assembly, monomer.

The protein localises to the cytoplasm. The enzyme catalyses AMP + ATP = 2 ADP. The protein operates within purine metabolism; AMP biosynthesis via salvage pathway; AMP from ADP: step 1/1. Its function is as follows. Catalyzes the reversible transfer of the terminal phosphate group between ATP and AMP. Plays an important role in cellular energy homeostasis and in adenine nucleotide metabolism. The sequence is that of Adenylate kinase from Xanthobacter autotrophicus (strain ATCC BAA-1158 / Py2).